We begin with the raw amino-acid sequence, 357 residues long: Alkanal monooxygenase alpha chain (357 aa).

Belongs to the bacterial luciferase oxidoreductase family. Heterodimer of an alpha and a beta chain.

The enzyme catalyses a long-chain fatty aldehyde + FMNH2 + O2 = a long-chain fatty acid + hnu + FMN + H2O + 2 H(+). Functionally, light-emitting reaction in luminous bacteria. The polypeptide is Alkanal monooxygenase alpha chain (luxA) (Kryptophanaron alfredi symbiont).